The following is a 435-amino-acid chain: Trigger factor (435 aa).

The PPIase FKBP-type domain maps to 163–248 (GDFVTFDFKG…VKEIKVKELP (86 aa)).

The protein belongs to the FKBP-type PPIase family. Tig subfamily.

It localises to the cytoplasm. The catalysed reaction is [protein]-peptidylproline (omega=180) = [protein]-peptidylproline (omega=0). Its function is as follows. Involved in protein export. Acts as a chaperone by maintaining the newly synthesized protein in an open conformation. Functions as a peptidyl-prolyl cis-trans isomerase. In Geobacter sp. (strain M21), this protein is Trigger factor.